A 490-amino-acid chain; its full sequence is Probable cytosol aminopeptidase (490 aa).

Residues K255 and D260 each coordinate Mn(2+). Residue K267 is part of the active site. Residues D278, D337, and E339 each contribute to the Mn(2+) site. Residue R341 is part of the active site.

It belongs to the peptidase M17 family. Requires Mn(2+) as cofactor.

It is found in the cytoplasm. The catalysed reaction is Release of an N-terminal amino acid, Xaa-|-Yaa-, in which Xaa is preferably Leu, but may be other amino acids including Pro although not Arg or Lys, and Yaa may be Pro. Amino acid amides and methyl esters are also readily hydrolyzed, but rates on arylamides are exceedingly low.. The enzyme catalyses Release of an N-terminal amino acid, preferentially leucine, but not glutamic or aspartic acids.. Functionally, presumably involved in the processing and regular turnover of intracellular proteins. Catalyzes the removal of unsubstituted N-terminal amino acids from various peptides. The protein is Probable cytosol aminopeptidase of Gluconobacter oxydans (strain 621H) (Gluconobacter suboxydans).